Consider the following 139-residue polypeptide: Large ribosomal subunit protein uL22 (139 aa).

A disordered region spans residues 1-21; that stretch reads MTAPTPEFRNKKQRKQQVKLR.

It belongs to the universal ribosomal protein uL22 family. In terms of assembly, part of the 50S ribosomal subunit.

Its function is as follows. This protein binds specifically to 23S rRNA; its binding is stimulated by other ribosomal proteins, e.g. L4, L17, and L20. It is important during the early stages of 50S assembly. It makes multiple contacts with different domains of the 23S rRNA in the assembled 50S subunit and ribosome. The globular domain of the protein is located near the polypeptide exit tunnel on the outside of the subunit, while an extended beta-hairpin is found that lines the wall of the exit tunnel in the center of the 70S ribosome. The sequence is that of Large ribosomal subunit protein uL22 from Deinococcus deserti (strain DSM 17065 / CIP 109153 / LMG 22923 / VCD115).